Consider the following 105-residue polypeptide: MSALTRLASFARVGGRLFRSGRARTAGDGGVRHAGGGVHIEPRYRQFPQLTRSQVFQSEFFSGLMWFWILWRFWHDSEEVLGHFPYPDPSQWTDEELGIPPDDED.

A mitochondrion-targeting transit peptide spans 1–33 (MSALTRLASFARVGGRLFRSGRARTAGDGGVRH). The interval 85 to 105 (PYPDPSQWTDEELGIPPDDED) is disordered. Over residues 93 to 105 (TDEELGIPPDDED) the composition is skewed to acidic residues.

Belongs to the complex I NDUFB2 subunit family. Complex I is composed of 45 different subunits.

The protein resides in the mitochondrion inner membrane. In terms of biological role, accessory subunit of the mitochondrial membrane respiratory chain NADH dehydrogenase (Complex I), that is believed not to be involved in catalysis. Complex I functions in the transfer of electrons from NADH to the respiratory chain. The immediate electron acceptor for the enzyme is believed to be ubiquinone. The sequence is that of NADH dehydrogenase [ubiquinone] 1 beta subcomplex subunit 2, mitochondrial (NDUFB2) from Gorilla gorilla gorilla (Western lowland gorilla).